Consider the following 163-residue polypeptide: uncharacterized protein (163 aa).

Residues 7–23 form a helical membrane-spanning segment; sequence TLVAFIATFFNLAATSI.

It is found in the membrane. This is an uncharacterized protein from Saccharomyces cerevisiae (strain ATCC 204508 / S288c) (Baker's yeast).